The chain runs to 1021 residues: Contactin-1 (1021 aa).

An N-terminal signal peptide occupies residues 1 to 20; sequence MKTPLLVSHLLLISLTSCLG. 6 consecutive Ig-like C2-type domains span residues 41–131, 137–223, 241–326, 331–407, 413–500, and 504–603; these read PIFE…ATLS, PFPP…KSVF, PADI…ARIY, PEWV…AELK, PTFE…GTLV, and PTRI…LVVR. Cystine bridges form between C65–C114 and C158–C211. N-linked (GlcNAc...) asparagine glycans are attached at residues N208 and N258. A disulfide bridge connects residues C263 and C310. N-linked (GlcNAc...) asparagine glycosylation occurs at N338. 2 disulfide bridges follow: C352–C391 and C436–C484. 4 N-linked (GlcNAc...) asparagine glycosylation sites follow: N457, N473, N494, and N521. A disulfide bond links C526 and C585. N593 carries N-linked (GlcNAc...) asparagine glycosylation. Fibronectin type-III domains follow at residues 608-706, 711-808, 813-908, and 909-1002; these read PPGG…TDGA, APSD…SAQD, APTE…APPS, and QPPR…TLSS. Residues 695–719 form a disordered region; the sequence is SIPSNRIKTDGAAPNVAPSDVGGGG. The N-linked (GlcNAc...) asparagine glycan is linked to N935. The GPI-anchor amidated serine moiety is linked to residue S1001. A propeptide spans 1002 to 1021 (removed in mature form); that stretch reads SGLLSLLLPSLGFLVFYSEF.

It belongs to the immunoglobulin superfamily. Contactin family. Monomer. Interacts with NOTCH1. Interacts with CNTNAP1 in cis form and TNR. Binds to the carbonic-anhydrase like domain of PTPRZ1. Detected in a complex with NRCAM and PTPRB. Interacts with TASOR. In terms of tissue distribution, expressed by neurons, oligodendrocytes and their progenitors (at protein level). Myelination regulates the expression being down-regulated when neurons are in contact with Schwann cells.

It localises to the cell membrane. Contactins mediate cell surface interactions during nervous system development. Involved in the formation of paranodal axo-glial junctions in myelinated peripheral nerves and in the signaling between axons and myelinating glial cells via its association with CNTNAP1. Participates in oligodendrocytes generation by acting as a ligand of NOTCH1. Its association with NOTCH1 promotes NOTCH1 activation through the released notch intracellular domain (NICD) and subsequent translocation to the nucleus. Interaction with TNR induces a repulsion of neurons and an inhibition of neurite outgrowth. The protein is Contactin-1 (Cntn1) of Rattus norvegicus (Rat).